A 553-amino-acid chain; its full sequence is CDP-diacylglycerol--glycerol-3-phosphate 3-phosphatidyltransferase, mitochondrial (553 aa).

The transit peptide at 1–25 (MAAPAAGPVFWRRLLGLLPGRPGLA) directs the protein to the mitochondrion. Position 46 is a phosphoserine (serine 46). 121-128 (ASLYLGTG) contributes to the ATP binding site. PLD phosphodiesterase domains follow at residues 212-238 (TIGL…SDSY) and 457-490 (RGWT…GYRS). Catalysis depends on residues histidine 217, lysine 219, and aspartate 224.

It belongs to the CDP-alcohol phosphatidyltransferase class-II family. Widely expressed with higher expression in testis, liver and brain.

It localises to the mitochondrion. It carries out the reaction a CDP-1,2-diacyl-sn-glycerol + sn-glycerol 3-phosphate = a 1,2-diacyl-sn-glycero-3-phospho-(1'-sn-glycero-3'-phosphate) + CMP + H(+). It participates in phospholipid metabolism; phosphatidylglycerol biosynthesis; phosphatidylglycerol from CDP-diacylglycerol: step 1/2. Its activity is regulated as follows. Activated by calcium and magnesium and inhibited by other bivalent cations. Functionally, functions in the biosynthesis of the anionic phospholipids phosphatidylglycerol and cardiolipin. This is CDP-diacylglycerol--glycerol-3-phosphate 3-phosphatidyltransferase, mitochondrial (Pgs1) from Mus musculus (Mouse).